A 1313-amino-acid polypeptide reads, in one-letter code: Mitogen-activated protein kinase kinase kinase 15 (1313 aa).

The segment at 1-58 (MESGGGNAPAGALGAASESPQCPPPPGVEGAAGPAEPDGAAEGAAGGSGEGESGGGPR) is disordered. A compositionally biased stretch (low complexity) spans 28–43 (VEGAAGPAEPDGAAEG). Residues 44 to 57 (AAGGSGEGESGGGP) show a composition bias toward gly residues. Residues 652-908 (NGERVVLGKG…TAELLREGFL (257 aa)) form the Protein kinase domain. Residues 658 to 666 (LGKGTYGIV) and K681 each bind ATP. D773 (proton acceptor) is an active-site residue. A disordered region spans residues 939 to 958 (EPMATSSSEHGSVSPDSDAQ). Over residues 942–955 (ATSSSEHGSVSPDS) the composition is skewed to polar residues. Phosphoserine is present on S994. Positions 1179-1225 (QLGELRQETNRLLEHLVEKEREYQNLLRQTLEQKTQELYHLQLKLKS) form a coiled coil.

The protein belongs to the protein kinase superfamily. STE Ser/Thr protein kinase family. MAP kinase kinase kinase subfamily. Requires Mg(2+) as cofactor. As to expression, isoform 2 and isoform 3 are widely expressed. Isoform 2 highest levels are observed in fetal brain, and isoform 3 highest levels in pancreas, peripheral blood leukocytes, fetal brain and spleen.

It carries out the reaction L-seryl-[protein] + ATP = O-phospho-L-seryl-[protein] + ADP + H(+). The enzyme catalyses L-threonyl-[protein] + ATP = O-phospho-L-threonyl-[protein] + ADP + H(+). Its activity is regulated as follows. Contains an N-terminal autoinhibitory domain. Activated by phosphorylation at Thr-812, inhibited by phosphorylation at Ser-924 and Ser-994. Serine/threonine kinase which acts as a component of the MAP kinase signal transduction pathway. Once activated, acts as an upstream activator of the p38 MAPK signal transduction cascade through the phosphorylation and activation of several MAP kinase kinases. May function in a signal transduction pathway that is activated by various cell stresses and leads to apoptosis. Involved in phosphorylation of WNK4 in response to osmotic stress or hypotonic low-chloride stimulation via the p38 MAPK signal transduction cascade. The polypeptide is Mitogen-activated protein kinase kinase kinase 15 (MAP3K15) (Homo sapiens (Human)).